The following is a 370-amino-acid chain: Pituitary-specific positive transcription factor 1 (370 aa).

Residues 5–13 carry the 9aaTAD motif; it reads AFASSDNFV. Positions 202 to 276 constitute a POU-specific domain; sequence MDSPEIRELE…ILSKWLEEAE (75 aa). The segment at residues 292–351 is a DNA-binding region (homeobox); the sequence is KRKRRTTISIAAKEALERHFGEQSKPSSQEIMRMAEGLNLEKEVVRVWFCNRRQREKRVK.

This sequence belongs to the POU transcription factor family. Class-1 subfamily. Pituitary gland.

It localises to the nucleus. Functionally, transcription factor that activates growth hormone and prolactin genes. Specifically binds to the consensus sequence 5'-TAAAT-3'. In Meleagris gallopavo (Wild turkey), this protein is Pituitary-specific positive transcription factor 1 (POU1F1).